Consider the following 426-residue polypeptide: Serine--tRNA ligase (426 aa).

The tract at residues 37–63 (RKSVQTRTEQLQAERNARSKSIGQAKA) is disordered. 233–235 (TAE) lines the L-serine pocket. 264-266 (RSE) contributes to the ATP binding site. An L-serine-binding site is contributed by E287. 351 to 354 (EISS) is an ATP binding site. S387 is an L-serine binding site.

This sequence belongs to the class-II aminoacyl-tRNA synthetase family. Type-1 seryl-tRNA synthetase subfamily. In terms of assembly, homodimer. The tRNA molecule binds across the dimer.

It is found in the cytoplasm. The catalysed reaction is tRNA(Ser) + L-serine + ATP = L-seryl-tRNA(Ser) + AMP + diphosphate + H(+). It catalyses the reaction tRNA(Sec) + L-serine + ATP = L-seryl-tRNA(Sec) + AMP + diphosphate + H(+). Its pathway is aminoacyl-tRNA biosynthesis; selenocysteinyl-tRNA(Sec) biosynthesis; L-seryl-tRNA(Sec) from L-serine and tRNA(Sec): step 1/1. Catalyzes the attachment of serine to tRNA(Ser). Is also able to aminoacylate tRNA(Sec) with serine, to form the misacylated tRNA L-seryl-tRNA(Sec), which will be further converted into selenocysteinyl-tRNA(Sec). In Pseudomonas entomophila (strain L48), this protein is Serine--tRNA ligase.